The primary structure comprises 461 residues: Cysteine--tRNA ligase (461 aa).

Cysteine 29 serves as a coordination point for Zn(2+). A 'HIGH' region motif is present at residues 31 to 41 (MTVYDFCHIGH). Zn(2+) contacts are provided by cysteine 210, histidine 235, and glutamate 239. The 'KMSKS' region signature appears at 267 to 271 (KMSKS). ATP is bound at residue lysine 270.

Belongs to the class-I aminoacyl-tRNA synthetase family. In terms of assembly, monomer. Zn(2+) serves as cofactor.

Its subcellular location is the cytoplasm. The enzyme catalyses tRNA(Cys) + L-cysteine + ATP = L-cysteinyl-tRNA(Cys) + AMP + diphosphate. In Ectopseudomonas mendocina (strain ymp) (Pseudomonas mendocina), this protein is Cysteine--tRNA ligase.